The primary structure comprises 229 residues: Ribonuclease 3 (229 aa).

The RNase III domain occupies 7–132 (ISAFCDRIGH…VIAAVYRDAG (126 aa)). Glu45 is a Mg(2+) binding site. Asp49 is an active-site residue. Asp118 and Glu121 together coordinate Mg(2+). Residue Glu121 is part of the active site. In terms of domain architecture, DRBM spans 157 to 226 (DPKTALQEWA…AKALLAQVES (70 aa)).

It belongs to the ribonuclease III family. Homodimer. Mg(2+) serves as cofactor.

The protein resides in the cytoplasm. It carries out the reaction Endonucleolytic cleavage to 5'-phosphomonoester.. In terms of biological role, digests double-stranded RNA. Involved in the processing of primary rRNA transcript to yield the immediate precursors to the large and small rRNAs (23S and 16S). Processes some mRNAs, and tRNAs when they are encoded in the rRNA operon. Processes pre-crRNA and tracrRNA of type II CRISPR loci if present in the organism. This chain is Ribonuclease 3, found in Dinoroseobacter shibae (strain DSM 16493 / NCIMB 14021 / DFL 12).